Consider the following 352-residue polypeptide: MLTLSDFDFDLPPELIAQVALPERSASRLLEVDNPAGAAGPARLIDRRFAELPECIAPGDLLVFNDTKVLKARFLGQKASGGKIEVLVERLTGERTALAQIRASKSPQPGTTIRLADAFDVTVGERVEPFYTLHFPDDCLTLIEQFGRLPLPPYIEHDPDSTDETRYQTVFAQNPGAVAAPTAGLHFDDALLARLDEKGVERATLTLHVGAGTFQPVRVENLAEHKMHSEWYHLPQALADKIAATRARGNRVIAVGTTSMRALEAAARDAEAAGRPLAAASTETDIFITPGYKFRVVDRLVTNFHLPKSTLLMLVSAFAGVETIRETYRHAIEQRYRFFSYGDAMLLTRRDA.

It belongs to the QueA family. Monomer.

It is found in the cytoplasm. The catalysed reaction is 7-aminomethyl-7-carbaguanosine(34) in tRNA + S-adenosyl-L-methionine = epoxyqueuosine(34) in tRNA + adenine + L-methionine + 2 H(+). It functions in the pathway tRNA modification; tRNA-queuosine biosynthesis. Its function is as follows. Transfers and isomerizes the ribose moiety from AdoMet to the 7-aminomethyl group of 7-deazaguanine (preQ1-tRNA) to give epoxyqueuosine (oQ-tRNA). The chain is S-adenosylmethionine:tRNA ribosyltransferase-isomerase from Paraburkholderia phytofirmans (strain DSM 17436 / LMG 22146 / PsJN) (Burkholderia phytofirmans).